Consider the following 210-residue polypeptide: Casparian strip membrane protein 1 (210 aa).

Residues 1 to 25 (MEKSEATTIDVAETSRESKGKAPLL) are disordered. The Cytoplasmic portion of the chain corresponds to 1–48 (MEKSEATTIDVAETSRESKGKAPLLRDPPAWVPAAVERQRAAPAYKRG). Residues 49–69 (VAIFDLILRISAATAALAATI) traverse the membrane as a helical segment. At 70–98 (TMGTTEQTLPFFTQFFQFQASYDDLPTFT) the chain is on the extracellular side. Residues 99 to 119 (FFVIAMSIVTGYLVLSVPFSI) form a helical membrane-spanning segment. The Cytoplasmic segment spans residues 120–138 (VCIARPVAAAPRLLLILCD). The chain crosses the membrane as a helical span at residues 139 to 159 (TLAVTLNTSAAGASAAIVYLA). Residues 160–183 (HNGNSDANWLAICQQFNDFCQRTS) are Extracellular-facing. Residues 184–204 (GAVVASFVAVVLLIFLVVLSA) form a helical membrane-spanning segment. The Cytoplasmic portion of the chain corresponds to 205-210 (SALKKH).

The protein belongs to the Casparian strip membrane proteins (CASP) family. In terms of assembly, homodimer and heterodimers.

The protein localises to the cell membrane. In terms of biological role, regulates membrane-cell wall junctions and localized cell wall deposition. Required for establishment of the Casparian strip membrane domain (CSD) and the subsequent formation of Casparian strips, a cell wall modification of the root endodermis that determines an apoplastic barrier between the intraorganismal apoplasm and the extraorganismal apoplasm and prevents lateral diffusion. This is Casparian strip membrane protein 1 from Erythranthe guttata (Yellow monkey flower).